The chain runs to 224 residues: Attacin-A (224 aa).

The first 20 residues, 1-20, serve as a signal peptide directing secretion; the sequence is MQKTSILIVALVALFAITEA. A propeptide spanning residues 21 to 34 is cleaved from the precursor; it reads LPSLPTTGPIRVRR.

This sequence belongs to the attacin/sarcotoxin-2 family. As to expression, hemolymph (at protein level).

Its subcellular location is the secreted. Its function is as follows. Hemolymph antibacterial protein. The polypeptide is Attacin-A (AttA) (Drosophila melanogaster (Fruit fly)).